Consider the following 509-residue polypeptide: Ribonuclease Y (509 aa).

Residues 1-21 (MIILVAVVTAVISFGLGYVVA) traverse the membrane as a helical segment. Residues 199–259 (TVSTVSLPSD…IRREIARLTL (61 aa)) enclose the KH domain. An HD domain is found at 325-418 (VLDHSIEVAQ…VAAADALSAA (94 aa)).

Belongs to the RNase Y family.

It is found in the cell membrane. Functionally, endoribonuclease that initiates mRNA decay. The protein is Ribonuclease Y of Pseudothermotoga lettingae (strain ATCC BAA-301 / DSM 14385 / NBRC 107922 / TMO) (Thermotoga lettingae).